The sequence spans 348 residues: MGAKGITYKDAGVDIDAGNTFVKMIKPFVRATSRPEVISDIGGFGGLFSLNTNKYKNPVLVSGTDGVGTKLKIAMMADRHDTVGIDLVAMCVNDIVVQGAEPLFFLDYFATGSLSPERGAAVVKGISEGCIQAGCALIGGETAEMPGFYQDGEYDLAGFTVGVVDRDKIIDGSSITVGNTLIGLASSGLHSNGYSLARKIIFDTLGFGINDMLPGHDRSVADELLTPTRIYVKSVLNLLRDFRVNGIAHITGGGLLENVPRILPKGCKAIIRRDSWTMPEIFRILQNGGNMEWTEMYRTFNCGIGMVLAVPENDVDEVLIRLSGLQEKAFVIGEVAKCEAGTESVEMI.

Belongs to the AIR synthase family.

Its subcellular location is the cytoplasm. The enzyme catalyses 2-formamido-N(1)-(5-O-phospho-beta-D-ribosyl)acetamidine + ATP = 5-amino-1-(5-phospho-beta-D-ribosyl)imidazole + ADP + phosphate + H(+). Its pathway is purine metabolism; IMP biosynthesis via de novo pathway; 5-amino-1-(5-phospho-D-ribosyl)imidazole from N(2)-formyl-N(1)-(5-phospho-D-ribosyl)glycinamide: step 2/2. The sequence is that of Phosphoribosylformylglycinamidine cyclo-ligase from Geobacter metallireducens (strain ATCC 53774 / DSM 7210 / GS-15).